The sequence spans 238 residues: MRPDNRAADQVRPIKITRHYTAYAEGSVLVEFGNTKVLCNASIEEGVPRWLKGQGKGWVTAEYGMLPRATHSRTRREATNGKQGGRTMEIQRLIARSLRAVVDLEAMGEIMITVDCDVIQADGGTRTASITGASVALADAFAHLIAKGQLKKNPMKGHVAAVSVGILGEDVLCDLEYVEDSAADTDMNVVMTEEGKMIEIQGTAEGEPFSHEQLLELLAVAKKGIADIVAVQKASLLD.

Phosphate is bound by residues arginine 86 and 124-126; that span reads GTR.

The protein belongs to the RNase PH family. In terms of assembly, homohexameric ring arranged as a trimer of dimers.

The enzyme catalyses tRNA(n+1) + phosphate = tRNA(n) + a ribonucleoside 5'-diphosphate. Phosphorolytic 3'-5' exoribonuclease that plays an important role in tRNA 3'-end maturation. Removes nucleotide residues following the 3'-CCA terminus of tRNAs; can also add nucleotides to the ends of RNA molecules by using nucleoside diphosphates as substrates, but this may not be physiologically important. Probably plays a role in initiation of 16S rRNA degradation (leading to ribosome degradation) during starvation. The protein is Ribonuclease PH of Vibrio cholerae serotype O1 (strain ATCC 39315 / El Tor Inaba N16961).